A 398-amino-acid chain; its full sequence is Tryptophan synthase beta chain (398 aa).

An N6-(pyridoxal phosphate)lysine modification is found at lysine 88.

It belongs to the TrpB family. As to quaternary structure, tetramer of two alpha and two beta chains. Pyridoxal 5'-phosphate serves as cofactor.

It carries out the reaction (1S,2R)-1-C-(indol-3-yl)glycerol 3-phosphate + L-serine = D-glyceraldehyde 3-phosphate + L-tryptophan + H2O. It participates in amino-acid biosynthesis; L-tryptophan biosynthesis; L-tryptophan from chorismate: step 5/5. Its function is as follows. The beta subunit is responsible for the synthesis of L-tryptophan from indole and L-serine. The protein is Tryptophan synthase beta chain of Histophilus somni (strain 2336) (Haemophilus somnus).